Consider the following 361-residue polypeptide: Mitogen-activated protein kinase 14 (361 aa).

One can recognise a Protein kinase domain in the interval 32–316 (YVPIKPIGRG…VSDALLHPYM (285 aa)). ATP is bound by residues 38-46 (IGRGAYGVV) and K61. D158 functions as the Proton acceptor in the catalytic mechanism. The residue at position 188 (T188) is a Phosphothreonine. The short motif at 188–190 (TEY) is the TXY element. A Phosphotyrosine modification is found at Y190. Phosphothreonine is present on T193.

Belongs to the protein kinase superfamily. CMGC Ser/Thr protein kinase family. MAP kinase subfamily. Interacts with MKK3. Post-translationally, dually phosphorylated on Thr-188 and Tyr-190, which activates the enzyme.

The enzyme catalyses L-seryl-[protein] + ATP = O-phospho-L-seryl-[protein] + ADP + H(+). It catalyses the reaction L-threonyl-[protein] + ATP = O-phospho-L-threonyl-[protein] + ADP + H(+). With respect to regulation, activated by threonine and tyrosine phosphorylation. The protein is Mitogen-activated protein kinase 14 (MPK14) of Arabidopsis thaliana (Mouse-ear cress).